Consider the following 412-residue polypeptide: Major facilitator superfamily domain-containing protein 3 (412 aa).

A run of 12 helical transmembrane segments spans residues 10–30, 40–60, 68–88, 99–119, 152–172, 173–193, 204–224, 252–272, 291–311, 320–340, 361–381, and 384–404; these read GLYL…PILL, VGLT…APLV, VWLT…AVLP, TTVM…DVAL, GGLL…LLAA, TYWL…LPWP, YLLQ…FVLT, LWSG…GGAL, LGSL…GASV, AVLL…TATF, FLAT…GVLA, and LGPH…VLDL.

The protein belongs to the major facilitator superfamily. As to expression, in brain, expressed in the cortex, striatum, hippocampus, hypothalamus, thalamus and cerebellum (at protein level). Widely expressed with highest levels in kidney and liver.

The protein resides in the membrane. In Mus musculus (Mouse), this protein is Major facilitator superfamily domain-containing protein 3 (Mfsd3).